We begin with the raw amino-acid sequence, 537 residues long: MGCVQCKDKEAAKLTEERDGSLNQSSGYRYGTDPTPQHYPSFGVTSIPNYNNFHAAGGQGLTVFGGVNSSSHTGTLRTRGGTGVTLFVALYDYEARTEDDLSFHKGEKFQILNSSEGDWWEARSLTTGETGYIPSNYVAPVDSIQAEEWYFGKLGRKDAERQLLSFGNPRGTFLIRESETTKGAYSLSIRDWDDMKGDHVKHYKIRKLDNGGYYITTRAQFETLQQLVQHYSERAAGLCCRLVVPCHKGMPRLTDLSVKTKDVWEIPRESLQLIKRLGNGQFGEVWMGTWNGNTKVAIKTLKPGTMSPESFLEEAQIMKKLKHDKLVQLYAVVSEEPIYIVTEYMNKGSLLDFLKDGEGRALKLPNLVDMAAQVAAGMAYIERMNYIHRDLRSANILVGNGLICKIADFGLARLIEDNEYTARQGAKFPIKWTAPEAALYGRFTIKSDVWSFGILLTELVTKGRVPYPGMNNREVLEQVERGYRMPCPQDCPISLHELMIHCWKKDPEERPTFEYLQGFLEDYFTATEPQYQPGENL.

A lipid anchor (N-myristoyl glycine) is attached at glycine 2. S-palmitoyl cysteine attachment occurs at residues cysteine 3 and cysteine 6. The disordered stretch occupies residues 14-35; sequence LTEERDGSLNQSSGYRYGTDPT. Serine 21 and serine 26 each carry phosphoserine. One can recognise an SH3 domain in the interval 82-143; sequence TGVTLFVALY…PSNYVAPVDS (62 aa). Residues 149–246 enclose the SH2 domain; it reads WYFGKLGRKD…GLCCRLVVPC (98 aa). Tyrosine 185 carries the post-translational modification Phosphotyrosine. The Protein kinase domain occupies 271–524; sequence LQLIKRLGNG…YLQGFLEDYF (254 aa). ATP contacts are provided by residues 277-285 and lysine 299; that span reads LGNGQFGEV. Catalysis depends on aspartate 390, which acts as the Proton acceptor. A Phosphotyrosine; by autocatalysis modification is found at tyrosine 420. Phosphotyrosine is present on tyrosine 531.

It belongs to the protein kinase superfamily. Tyr protein kinase family. SRC subfamily. As to quaternary structure, interacts (via its SH3 domain) with PIK3R1 and PRMT8. Interacts with FYB1, PAG1, and SH2D1A. Interacts with CD79A (tyrosine-phosphorylated form); the interaction increases FYN activity. Interacts (via SH2 domain) with CSF1R (tyrosine phosphorylated). Interacts with TOM1L1 (phosphorylated form). Interacts with KDR (tyrosine phosphorylated). Interacts (via SH3 domain) with KLHL2 (via N-terminus). Interacts with SH2D1A and SLAMF1. Interacts with ITCH; the interaction phosphorylates ITCH and negatively regulates its activity. Interacts with FASLG. Interacts with RUNX3. Interacts with KIT. Interacts with EPHA8; possible downstream effector of EPHA8 in regulation of cell adhesion. Interacts with PTK2/FAK1; this interaction leads to PTK2/FAK1 phosphorylation and activation. Interacts with CAV1; this interaction couples integrins to the Ras-ERK pathway. Interacts with UNC119. Interacts (via SH2 domain) with PTPRH (phosphorylated form). Interacts with PTPRO (phosphorylated form). Interacts with PTPRB (phosphorylated form). Interacts with FYB2. Interacts with DSCAM. Interacts with SKAP1 and FYB1; this interaction promotes the phosphorylation of CLNK. Interacts with NEDD9; in the presence of PTK2. Requires Mn(2+) as cofactor. Post-translationally, autophosphorylated at Tyr-420. Phosphorylation on the C-terminal tail at Tyr-531 by CSK maintains the enzyme in an inactive state. PTPRC/CD45 dephosphorylates Tyr-531 leading to activation. Dephosphorylation at Tyr-420 by PTPN2 negatively regulates T-cell receptor signaling. Phosphorylated at tyrosine residues, which can be enhanced by NTN1. Palmitoylated. Palmitoylation at Cys-3 and Cys-6, probably by ZDHHC21, regulates subcellular location. Detected in spinal cord oligodendrocytes (at protein level).

The protein resides in the cytoplasm. It is found in the nucleus. The protein localises to the cell membrane. It localises to the perikaryon. It catalyses the reaction L-tyrosyl-[protein] + ATP = O-phospho-L-tyrosyl-[protein] + ADP + H(+). Inhibited by phosphorylation of Tyr-531 by leukocyte common antigen and activated by dephosphorylation of this site. In terms of biological role, non-receptor tyrosine-protein kinase that plays a role in many biological processes including regulation of cell growth and survival, cell adhesion, integrin-mediated signaling, cytoskeletal remodeling, cell motility, immune response and axon guidance. Inactive FYN is phosphorylated on its C-terminal tail within the catalytic domain. Following activation by PKA, the protein subsequently associates with PTK2/FAK1, allowing PTK2/FAK1 phosphorylation, activation and targeting to focal adhesions. Involved in the regulation of cell adhesion and motility through phosphorylation of CTNNB1 (beta-catenin) and CTNND1 (delta-catenin). Regulates cytoskeletal remodeling by phosphorylating several proteins including the actin regulator WAS and the microtubule-associated proteins MAP2 and MAPT. Promotes cell survival by phosphorylating AGAP2/PIKE-A and preventing its apoptotic cleavage. Participates in signal transduction pathways that regulate the integrity of the glomerular slit diaphragm (an essential part of the glomerular filter of the kidney) by phosphorylating several slit diaphragm components including NPHS1, KIRREL1 and TRPC6. Plays a role in neural processes by phosphorylating DPYSL2, a multifunctional adapter protein within the central nervous system, ARHGAP32, a regulator for Rho family GTPases implicated in various neural functions, and SNCA, a small pre-synaptic protein. Involved in reelin signaling by mediating phosphorylation of DAB1 following reelin (RELN)-binding to its receptor. Participates in the downstream signaling pathways that lead to T-cell differentiation and proliferation following T-cell receptor (TCR) stimulation. Phosphorylates PTK2B/PYK2 in response to T-cell receptor activation. Also participates in negative feedback regulation of TCR signaling through phosphorylation of PAG1, thereby promoting interaction between PAG1 and CSK and recruitment of CSK to lipid rafts. CSK maintains LCK and FYN in an inactive form. Promotes CD28-induced phosphorylation of VAV1. In mast cells, phosphorylates CLNK after activation of immunoglobulin epsilon receptor signaling. Can also promote CD244-mediated NK cell activation. This Rattus norvegicus (Rat) protein is Tyrosine-protein kinase Fyn.